We begin with the raw amino-acid sequence, 207 residues long: Protein 6b (207 aa).

The tract at residues 160-183 (GNYTEEGEDDDDEMDDEGEAGGAE) is disordered. The span at 164–178 (EEGEDDDDEMDDEGE) shows a compositional bias: acidic residues.

Its function is as follows. Involved in tumor formation and increases auxin and cytokinin effects in host plants. This Agrobacterium tumefaciens (strain Ach5) protein is Protein 6b (6b).